An 84-amino-acid polypeptide reads, in one-letter code: Cytochrome b559 subunit alpha (84 aa).

Residues Val-22–Trp-36 form a helical membrane-spanning segment. Heme is bound at residue His-24.

The protein belongs to the PsbE/PsbF family. Heterodimer of an alpha subunit and a beta subunit. PSII is composed of 1 copy each of membrane proteins PsbA, PsbB, PsbC, PsbD, PsbE, PsbF, PsbH, PsbI, PsbJ, PsbK, PsbL, PsbM, PsbT, PsbX, PsbY, PsbZ, Psb30/Ycf12, at least 3 peripheral proteins of the oxygen-evolving complex and a large number of cofactors. It forms dimeric complexes. Heme b is required as a cofactor.

The protein localises to the plastid. It localises to the chloroplast thylakoid membrane. Its function is as follows. This b-type cytochrome is tightly associated with the reaction center of photosystem II (PSII). PSII is a light-driven water:plastoquinone oxidoreductase that uses light energy to abstract electrons from H(2)O, generating O(2) and a proton gradient subsequently used for ATP formation. It consists of a core antenna complex that captures photons, and an electron transfer chain that converts photonic excitation into a charge separation. In Gracilaria tenuistipitata var. liui (Red alga), this protein is Cytochrome b559 subunit alpha.